Consider the following 620-residue polypeptide: MTSSQDACYISLLGLAEYFRTSSPPNIKKCIQCLQALFTFKPPLKVEARTHLQLGQILMAYTKNTDLARNHLEQAWMLSENINNFDDVKFDTASLLAQLYQQQEQSSLAKPVLRKAIELSQHNVYWHCKLLFQLAQTHATDKEYALASELLAVGVESTDETNATYLKTLFLLSRAMIMMIERKTGDVLTILNQAGTMIDNAVQNIHLKEYLKVFFYVLQVCHYLQLGQVKTVKTSLKQLQQSIQTIMAPNWPADEQIFGQSNTEMFMWLPKEQLYVLVYLVTVSHSMMAGYMDKAQKYTEKALTQIEKLKSQENKPILAVFQIILLEHIIMCRLVMGNKSLAIKEIALAKDVCLSSSNKFLLKKHSAQLHCLLGLYAMSASYFEHAERQFFACINDTTERDLKLFANLNLAIVYLRMKREQELRQILDQVQQENSQCSNSQALMGSFYYVQGLNAFHKSSFHEAKRFLRETLKMANAEDLNRLTSCSLVLLSHVFLSIGNSKESMNMVTPAMQLASKIPDIHVQLWGSAILKDLHRMLKEPALETEAYNNHCNFSQNLIADQMKCTKFPEHTLISWVQGDPPLPMLSQEILEAPPAATIQQQSATVVRLSGQPGQQVIYQ.

TPR repeat units lie at residues 90 to 123 (FDTA…SQHN), 445 to 478 (GSFY…ANAE), and 485 to 518 (SCSL…ASKI).

This sequence belongs to the SCC4/mau-2 family. Component of the cohesin loading complex.

Its subcellular location is the nucleus. The protein resides in the nucleoplasm. In terms of biological role, required for association of the cohesin complex with chromatin during interphase. Plays a role in sister chromatid cohesion and normal progression through prometaphase. The protein is MAU2 chromatid cohesion factor homolog of Aedes aegypti (Yellowfever mosquito).